We begin with the raw amino-acid sequence, 189 residues long: Peptide deformylase (189 aa).

Fe cation-binding residues include C116 and H159. E160 is an active-site residue. H163 is a Fe cation binding site.

The protein belongs to the polypeptide deformylase family. Fe(2+) serves as cofactor.

The catalysed reaction is N-terminal N-formyl-L-methionyl-[peptide] + H2O = N-terminal L-methionyl-[peptide] + formate. In terms of biological role, removes the formyl group from the N-terminal Met of newly synthesized proteins. Requires at least a dipeptide for an efficient rate of reaction. N-terminal L-methionine is a prerequisite for activity but the enzyme has broad specificity at other positions. The chain is Peptide deformylase from Limosilactobacillus fermentum (strain NBRC 3956 / LMG 18251) (Lactobacillus fermentum).